Here is a 404-residue protein sequence, read N- to C-terminus: Putative gustatory receptor 94a (404 aa).

The Cytoplasmic portion of the chain corresponds to Met-1–Arg-11. Residues Met-12–Asn-32 form a helical membrane-spanning segment. Residues Arg-33–Arg-43 are Extracellular-facing. A helical membrane pass occupies residues Phe-44–Gly-64. Topologically, residues Arg-65–Ser-133 are cytoplasmic. A helical transmembrane segment spans residues Ile-134–Leu-154. Topologically, residues Gln-155–Arg-171 are extracellular. A helical transmembrane segment spans residues Leu-172–Val-192. The Cytoplasmic segment spans residues Lys-193 to Ser-260. The helical transmembrane segment at Leu-261–Leu-281 threads the bilayer. Residues Tyr-282–Asp-296 are Extracellular-facing. The chain crosses the membrane as a helical span at residues Gly-297–Leu-317. Residues Thr-318–Arg-376 lie on the Cytoplasmic side of the membrane. The chain crosses the membrane as a helical span at residues Leu-377–Leu-397. Residues Ser-398 to Gln-404 lie on the Extracellular side of the membrane.

This sequence belongs to the insect chemoreceptor superfamily. Gustatory receptor (GR) family. Gr22e subfamily. As to expression, in larvae, is expressed in neurons of the terminal external chemosensory organ.

The protein resides in the cell membrane. Its function is as follows. Probable gustatory receptor which mediates acceptance or avoidance behavior, depending on its substrates. This is Putative gustatory receptor 94a (Gr94a) from Drosophila melanogaster (Fruit fly).